A 324-amino-acid polypeptide reads, in one-letter code: Glutathione synthetase (324 aa).

Residues 124–309 (KLAIAQFREF…VAGMFIDALE (186 aa)) enclose the ATP-grasp domain. 150 to 206 (HAEQGDVIFKPLDGMGGAGIFRVGADGMNLGSVIETLTHNGTRTVMAQQYIPAIRDG) contacts ATP. The Mg(2+) site is built by glutamate 280 and asparagine 282.

This sequence belongs to the prokaryotic GSH synthase family. It depends on Mg(2+) as a cofactor. Requires Mn(2+) as cofactor.

The catalysed reaction is gamma-L-glutamyl-L-cysteine + glycine + ATP = glutathione + ADP + phosphate + H(+). Its pathway is sulfur metabolism; glutathione biosynthesis; glutathione from L-cysteine and L-glutamate: step 2/2. This chain is Glutathione synthetase, found in Ralstonia nicotianae (strain ATCC BAA-1114 / GMI1000) (Ralstonia solanacearum).